The sequence spans 490 residues: MRPAFALCLLWQALWPGPGGGEHPTADRAGCSASGACYSLHHATMKRQAAEEACILRGGALSTVRAGAELRAVLALLRAGPGPGGGSKDLLFWVALERRRSHCTLENEPLRGFSWLSSDPGGLESDTLQWVEEPQRSCTARRCAVLQATGGVEPAGWKEMRCHLRANGYLCKYQFEVLCPAPRPGAASNLSYRAPFQLHSAALDFSPPGTEVSALCRGQLPISVTCIADEIGARWDKLSGDVLCPCPGRYLRAGKCAELPNCLDDLGGFACECATGFELGKDGRSCVTSGEGQPTLGGTGVPTRRPPATATSPVPQRTWPIRVDEKLGETPLVPEQDNSVTSIPEIPRWGSQSTMSTLQMSLQAESKATITPSGSVISKFNSTTSSATPQAFDSSSAVVFIFVSTAVVVLVILTMTVLGLVKLCFHESPSSQPRKESMGPPGLESDPEPAALGSSSAHCTNNGVKVGDCDLRDRAEGALLAESPLGSSDA.

The signal sequence occupies residues 1–21 (MRPAFALCLLWQALWPGPGGG). The Extracellular segment spans residues 22–397 (EHPTADRAGC…TPQAFDSSSA (376 aa)). The region spanning 33-173 (ASGACYSLHH…LRANGYLCKY (141 aa)) is the C-type lectin domain. An intrachain disulfide couples Cys143 to Cys162. Residue Asn189 is glycosylated (N-linked (GlcNAc...) asparagine). The EGF-like domain maps to 245–287 (PCPGRYLRAGKCAELPNCLDDLGGFACECATGFELGKDGRSCV). Residues 286–349 (CVTSGEGQPT…VTSIPEIPRW (64 aa)) form a disordered region. Positions 301–315 (VPTRRPPATATSPVP) are enriched in low complexity. N-linked (GlcNAc...) asparagine glycosylation occurs at Asn381. The chain crosses the membrane as a helical span at residues 398-418 (VVFIFVSTAVVVLVILTMTVL). The Cytoplasmic segment spans residues 419–490 (GLVKLCFHES…AESPLGSSDA (72 aa)). The segment at 428-461 (SPSSQPRKESMGPPGLESDPEPAALGSSSAHCTN) is disordered.

The protein localises to the membrane. In Homo sapiens (Human), this protein is C-type lectin domain family 14 member A (CLEC14A).